A 331-amino-acid polypeptide reads, in one-letter code: Aromatic 2-oxoacid reductase (331 aa).

Residues R154–I155, D175, A205–P206, N211, A232–R234, and D258 each bind NAD(+). Residue R234 is part of the active site. E263 is an active-site residue. The Proton donor role is filled by H295.

It belongs to the D-isomer specific 2-hydroxyacid dehydrogenase family.

The catalysed reaction is (R)-3-phenyllactate + NAD(+) = 3-phenylpyruvate + NADH + H(+). It catalyses the reaction (2R)-2-hydroxy-3-(4-hydroxyphenyl)propanoate + NAD(+) = 3-(4-hydroxyphenyl)pyruvate + NADH + H(+). The enzyme catalyses 3-(indol-3-yl)lactate + NAD(+) = indole-3-pyruvate + NADH + H(+). The protein operates within amino-acid degradation. Functionally, essential for the reductive metabolism of L-phenylalanine, L-tyrosine and L-tryptophan. Catalyzes the conversion of phenylpyruvic acid to phenyllactic acid, 4-hydroxy-phenylpyruvic acid to 4-hydroxy-phenyllactic acid, and indolepyruvic acid to indolelactic acid. In Clostridium sporogenes (strain ATCC 7955 / DSM 767 / NBRC 16411 / NCIMB 8053 / NCTC 8594 / PA 3679), this protein is Aromatic 2-oxoacid reductase.